We begin with the raw amino-acid sequence, 394 residues long: Elongation factor Tu (394 aa).

The 195-residue stretch at 10–204 (KPHVNVGTIG…ALDSYIPEPE (195 aa)) folds into the tr-type G domain. A G1 region spans residues 19–26 (GHVDHGKT). Residue 19-26 (GHVDHGKT) coordinates GTP. T26 lines the Mg(2+) pocket. A G2 region spans residues 60–64 (GITIA). Residues 81-84 (DCPG) form a G3 region. GTP-binding positions include 81-85 (DCPGH) and 136-139 (NKCD). Residues 136–139 (NKCD) form a G4 region. The tract at residues 174-176 (SAL) is G5.

This sequence belongs to the TRAFAC class translation factor GTPase superfamily. Classic translation factor GTPase family. EF-Tu/EF-1A subfamily. In terms of assembly, monomer.

It is found in the cytoplasm. It catalyses the reaction GTP + H2O = GDP + phosphate + H(+). In terms of biological role, GTP hydrolase that promotes the GTP-dependent binding of aminoacyl-tRNA to the A-site of ribosomes during protein biosynthesis. The sequence is that of Elongation factor Tu from Vibrio campbellii (strain ATCC BAA-1116).